A 198-amino-acid chain; its full sequence is Ribonuclease HII (198 aa).

The RNase H type-2 domain maps to 10 to 198 (HLVAGVDEVG…PVKRALGLVC (189 aa)). 3 residues coordinate a divalent metal cation: Asp16, Glu17, and Asp108.

Belongs to the RNase HII family. Requires Mn(2+) as cofactor. Mg(2+) serves as cofactor.

It is found in the cytoplasm. It carries out the reaction Endonucleolytic cleavage to 5'-phosphomonoester.. Functionally, endonuclease that specifically degrades the RNA of RNA-DNA hybrids. The polypeptide is Ribonuclease HII (Enterobacter sp. (strain 638)).